Here is a 417-residue protein sequence, read N- to C-terminus: Divinyl chlorophyllide a 8-vinyl-reductase, chloroplastic (417 aa).

The N-terminal 49 residues, 1–49, are a transit peptide targeting the chloroplast; that stretch reads MSLCSSFNVFASYSPKPKTIFKDSKFISQFQVKSSPLASTFHTNESSTS.

In terms of tissue distribution, highly expressed in leaves, stems and flower buds. Detected in roots.

It is found in the plastid. Its subcellular location is the chloroplast. It carries out the reaction protochlorophyllide a + NADP(+) = 3,8-divinyl protochlorophyllide a + NADPH + H(+). Its pathway is porphyrin-containing compound metabolism; chlorophyll biosynthesis. Functionally, catalyzes the conversion of divinyl chlorophyllide to monovinyl chlorophyllide. Reduces the 8-vinyl group of the tetrapyrrole to an ethyl group using NADPH as the reductant. The best substrate is (3,8-divinyl)-chlorophyllide a (DV-Chlidea). Very low activity with (3,8-divinyl)-protochlorophyllide a (DV-Pchlidea) and (3,8-divinyl)-magnesium-protoporphyrin IX monomethyl ester (DV-MPE). No activity with (3,8-divinyl)-chlorophyllide b (DV-Chlideb), (3,8-divinyl)-magnesium-protoporphyrin IX (DV-Mg-Proto) and either (3,8-divinyl)-chlorophyll a (DV-Chla) or b (DV-Chlb). The chain is Divinyl chlorophyllide a 8-vinyl-reductase, chloroplastic (DVR) from Arabidopsis thaliana (Mouse-ear cress).